The sequence spans 470 residues: PTS system trehalose-specific EIIBC component (470 aa).

A PTS EIIB type-1 domain is found at 1 to 88 (MGELNKSARQ…VKETGIGEST (88 aa)). Cys-27 (phosphocysteine intermediate; for EIIB activity) is an active-site residue. Cys-27 is modified (phosphocysteine; by EIIA). The PTS EIIC type-1 domain maps to 108–470 (KTLADIFIPI…TYAYARFKHK (363 aa)). 10 consecutive transmembrane segments (helical) span residues 110–130 (LADIFIPILPAIVTAGLLMGI), 160–180 (INLIAGTAFTFLPALIGWSAV), 183–203 (FGGNPLLGIVLGVMLVHPDLL), 234–254 (GQVLPILLASYMLAKIEVFLT), 263–283 (LLVVAPITLLLTGFASFIIIG), 301–321 (FGSFAALGGLLYGGFYSALVI), 326–346 (HTFLAVDLQLIGSKLGGTFLW), 347–367 (PMLALSNIAQGSAALAMMFIV), 403–423 (FIIAMVSSGLAGMYISSQGVL), and 443–463 (WGAFAIGMAIVLIVPFAGTYA).

Its subcellular location is the cell membrane. The enzyme catalyses alpha,alpha-trehalose(out) + N(pros)-phospho-L-histidyl-[protein] = alpha,alpha-trehalose 6-phosphate(in) + L-histidyl-[protein]. Functionally, the phosphoenolpyruvate-dependent sugar phosphotransferase system (sugar PTS), a major carbohydrate active transport system, catalyzes the phosphorylation of incoming sugar substrates concomitantly with their translocation across the cell membrane. This system is involved in trehalose transport. In Bacillus subtilis (strain 168), this protein is PTS system trehalose-specific EIIBC component (treP).